We begin with the raw amino-acid sequence, 247 residues long: tRNA (guanine-N(1)-)-methyltransferase (247 aa).

S-adenosyl-L-methionine contacts are provided by residues Gly116 and 135 to 140 (IGDYVL).

Belongs to the RNA methyltransferase TrmD family. As to quaternary structure, homodimer.

The protein resides in the cytoplasm. The enzyme catalyses guanosine(37) in tRNA + S-adenosyl-L-methionine = N(1)-methylguanosine(37) in tRNA + S-adenosyl-L-homocysteine + H(+). Functionally, specifically methylates guanosine-37 in various tRNAs. This Symbiobacterium thermophilum (strain DSM 24528 / JCM 14929 / IAM 14863 / T) protein is tRNA (guanine-N(1)-)-methyltransferase.